The sequence spans 480 residues: MFDVAIIGAGVIGCSIARELSKYNLNVALIEKENDVGNVTTKANSAIIHAGYDAKPGTLKGKLNAKGNLMFDELCRELEVPFKRVGSLVLAFDDDEMKTLGKLYEQGIQNGVPELYILSKEKVLEMDPNISDNIKGALYAKTGGIIGPWEFTIALAENAVENGVNIFLSNEVVDIEKKDFGYRIITNKDTYDTKYVVNCAGLYADKINNMVSNNKMEIIPRRGQYYLLDKTVGNLVKYVIFQCPSKLGKGVLVTPTVHGNLLIGPDAEDLIDKTALNTTSEGLNFIVEVARRSVKTLPLNMAITNFAGLRARTERDDFIIEEAVDAKGFINVAGIESPGLSSAPAISLYVIDILKNIAKKIEKKENFNPYRRAIPKFIELSEDEKNELVKKDKRFGKIICRCESITEGEIVSAIHRNVGARTVDAVKRRVRAGMGRCQGGFCSPRVIEILARELGVEMTEIEKDHEGSYILTGPTKSEVQ.

FAD contacts are provided by residues Ile12, Glu31, 40-41 (TT), and 45-47 (SAI). Sn-glycerol 3-phosphate-binding residues include Ser45 and His49. His49 acts as the Proton acceptor in catalysis. Val172 is an FAD binding site. Sn-glycerol 3-phosphate is bound by residues Lys249 and Arg310. 335 to 336 (IE) provides a ligand contact to FAD. Ser337 contributes to the sn-glycerol 3-phosphate binding site. Ser341 lines the FAD pocket. Residues Cys400, Cys402, Cys437, and Cys442 each contribute to the [2Fe-2S] cluster site.

[2Fe-2S] cluster serves as cofactor.

It catalyses the reaction sn-glycerol 3-phosphate + A = dihydroxyacetone phosphate + AH2. It functions in the pathway polyol metabolism; glycerol degradation via glycerol kinase pathway; glycerone phosphate from sn-glycerol 3-phosphate (aerobic route): step 1/1. In terms of biological role, catalyzes the dehydrogenation of glycerol 3-phosphate to dihydroxyacetone phosphate. Is probably involved in anaerobic glycerol metabolism. Active in vitro with the artificial electron acceptor 2,6-dichlorophenolindophenol (DCPIP), but not with NAD or NADP. Also displays a very low oxidase activity in vitro on glycerol 3-phosphate with O2 as the electron acceptor, but this activity is most likely not physiological. The sequence is that of Glycerol 3-phosphate dehydrogenase from Caloramator mitchellensis.